We begin with the raw amino-acid sequence, 314 residues long: tRNA dimethylallyltransferase (314 aa).

A disordered region spans residues 1 to 24 (MAEEPQRSPAPTSPFAFTVPSNPL). 40 to 47 (GPTASGKS) is an ATP binding site. 42–47 (TASGKS) serves as a coordination point for substrate.

It belongs to the IPP transferase family. As to quaternary structure, monomer. It depends on Mg(2+) as a cofactor.

The enzyme catalyses adenosine(37) in tRNA + dimethylallyl diphosphate = N(6)-dimethylallyladenosine(37) in tRNA + diphosphate. Catalyzes the transfer of a dimethylallyl group onto the adenine at position 37 in tRNAs that read codons beginning with uridine, leading to the formation of N6-(dimethylallyl)adenosine (i(6)A). This chain is tRNA dimethylallyltransferase, found in Cereibacter sphaeroides (strain ATCC 17029 / ATH 2.4.9) (Rhodobacter sphaeroides).